The chain runs to 491 residues: Cytochrome P450 81F2 (491 aa).

A helical membrane pass occupies residues 283 to 303 (VIIKGLMLSMMLAGTDTAAVT). Residue Cys429 coordinates heme.

The protein belongs to the cytochrome P450 family. Heme is required as a cofactor.

It is found in the membrane. It functions in the pathway secondary metabolite biosynthesis. In terms of biological role, involved in indole glucosinolate biosynthesis. Catalyzes hydroxylation reactions of the glucosinolate indole ring. Converts indol-3-yl-methylglucosinolate (I3M) to 4-hydroxy-indol-3-yl-methylglucosinolate (4OH-I3M) and/or 1-hydroxy-indol-3-yl-methylglucosinolate (1OH-I3M) intermediates. These hydroxy intermediates are converted to 4-methoxy-indol-3-yl-methylglucosinolate (4MO-I3M) and 1-methoxy-indol-3-yl-methylglucosinolate (1MO-I3M) by indole glucosinolate methyltransferase 1 and 2 (IGMT1 and IGMT2). Contributes to defense against the green peach aphid (Myzus persicae), a generalist phloem-feeding herbivore. Required for the biosynthesis of antifungal indole glucosinolate metabolites. Required for the pathogen-induced accumulation of 4MO-I3M, which in turn is activated by the atypical BGLU26/PEN2 myrosinase. Required for the biosynthesis of Trp-derived antifungal compounds and non-host resistance to the necrotrophic fungal pathogen Plectosphaerella cucumerina. Required for resistance to the non-adapted fungal pathogen Colletotrichum gloeosporioides. The chain is Cytochrome P450 81F2 from Arabidopsis thaliana (Mouse-ear cress).